Consider the following 119-residue polypeptide: Large ribosomal subunit protein bL20 (119 aa).

This sequence belongs to the bacterial ribosomal protein bL20 family.

Its function is as follows. Binds directly to 23S ribosomal RNA and is necessary for the in vitro assembly process of the 50S ribosomal subunit. It is not involved in the protein synthesizing functions of that subunit. In Streptococcus gordonii (strain Challis / ATCC 35105 / BCRC 15272 / CH1 / DL1 / V288), this protein is Large ribosomal subunit protein bL20.